Reading from the N-terminus, the 204-residue chain is uncharacterized protein (204 aa).

In terms of biological role, possibly involved in pGI2 replication mechanism. This is an uncharacterized protein from Bacillus thuringiensis.